The following is a 137-amino-acid chain: Small ribosomal subunit protein bS6 (137 aa).

The segment at 96 to 137 (ITEASPMAKAKDERDTRRSSEERAPRAEATEEAEESAENTAE) is disordered. Residues 104–124 (KAKDERDTRRSSEERAPRAEA) are compositionally biased toward basic and acidic residues. Positions 125-137 (TEEAEESAENTAE) are enriched in acidic residues.

It belongs to the bacterial ribosomal protein bS6 family.

In terms of biological role, binds together with bS18 to 16S ribosomal RNA. This chain is Small ribosomal subunit protein bS6, found in Shewanella pealeana (strain ATCC 700345 / ANG-SQ1).